We begin with the raw amino-acid sequence, 148 residues long: D-aminoacyl-tRNA deacylase (148 aa).

Positions 137 to 138 (GP) match the Gly-cisPro motif, important for rejection of L-amino acids motif.

The protein belongs to the DTD family. As to quaternary structure, homodimer.

Its subcellular location is the cytoplasm. It catalyses the reaction glycyl-tRNA(Ala) + H2O = tRNA(Ala) + glycine + H(+). The catalysed reaction is a D-aminoacyl-tRNA + H2O = a tRNA + a D-alpha-amino acid + H(+). An aminoacyl-tRNA editing enzyme that deacylates mischarged D-aminoacyl-tRNAs. Also deacylates mischarged glycyl-tRNA(Ala), protecting cells against glycine mischarging by AlaRS. Acts via tRNA-based rather than protein-based catalysis; rejects L-amino acids rather than detecting D-amino acids in the active site. By recycling D-aminoacyl-tRNA to D-amino acids and free tRNA molecules, this enzyme counteracts the toxicity associated with the formation of D-aminoacyl-tRNA entities in vivo and helps enforce protein L-homochirality. In Ligilactobacillus salivarius (strain UCC118) (Lactobacillus salivarius), this protein is D-aminoacyl-tRNA deacylase.